The chain runs to 236 residues: V-set and transmembrane domain-containing protein 1 (236 aa).

A signal peptide spans M1–G16. Over Y17–T135 the chain is Extracellular. One can recognise an Ig-like V-type domain in the interval P27 to Q114. Residues N44 and N55 are each glycosylated (N-linked (GlcNAc...) asparagine). Cysteines 49 and 96 form a disulfide. Residues I136–I156 form a helical membrane-spanning segment. Residues Y157 to V236 lie on the Cytoplasmic side of the membrane. The interval S166–D200 is disordered. 2 short sequence motifs (ITIM motif) span residues V204–L209 and H229–L234. The tract at residues S215–V236 is disordered.

In terms of processing, isoform 2 is N-glycosylated. Expressed on myeloid (neutrophils, eosinophils and monocytes) but not on lymphoid cells.

It localises to the membrane. It is found in the secreted. Functionally, behaves as a cytokine, promoting IL17A secretion by CD4+ T-cells, and differentiation and activation of IL17 producing helper T-cells (TH17). Its function is as follows. Inhibitory immune receptor involved in the regulation of phagocytes. This Homo sapiens (Human) protein is V-set and transmembrane domain-containing protein 1 (VSTM1).